Consider the following 309-residue polypeptide: Ornithine carbamoyltransferase (309 aa).

Residues 52–55, Gln-79, Arg-103, and 130–133 contribute to the carbamoyl phosphate site; these read STRT and HPCQ. L-ornithine contacts are provided by residues Asn-161, Asp-221, and 225–226; that span reads SM. Carbamoyl phosphate is bound by residues 261–262 and Arg-289; that span reads CL.

The protein belongs to the aspartate/ornithine carbamoyltransferase superfamily. OTCase family.

Its subcellular location is the cytoplasm. The enzyme catalyses carbamoyl phosphate + L-ornithine = L-citrulline + phosphate + H(+). Its pathway is amino-acid biosynthesis; L-arginine biosynthesis; L-arginine from L-ornithine and carbamoyl phosphate: step 1/3. In terms of biological role, reversibly catalyzes the transfer of the carbamoyl group from carbamoyl phosphate (CP) to the N(epsilon) atom of ornithine (ORN) to produce L-citrulline. This Methanoculleus marisnigri (strain ATCC 35101 / DSM 1498 / JR1) protein is Ornithine carbamoyltransferase.